A 386-amino-acid polypeptide reads, in one-letter code: Heat-inducible transcription repressor HrcA (386 aa).

Belongs to the HrcA family.

Its function is as follows. Negative regulator of class I heat shock genes (grpE-dnaK-dnaJ and groELS operons). Prevents heat-shock induction of these operons. This Chlamydia caviae (strain ATCC VR-813 / DSM 19441 / 03DC25 / GPIC) (Chlamydophila caviae) protein is Heat-inducible transcription repressor HrcA.